A 256-amino-acid chain; its full sequence is Indole-3-glycerol phosphate synthase (256 aa).

It belongs to the TrpC family.

The enzyme catalyses 1-(2-carboxyphenylamino)-1-deoxy-D-ribulose 5-phosphate + H(+) = (1S,2R)-1-C-(indol-3-yl)glycerol 3-phosphate + CO2 + H2O. Its pathway is amino-acid biosynthesis; L-tryptophan biosynthesis; L-tryptophan from chorismate: step 4/5. The polypeptide is Indole-3-glycerol phosphate synthase (Pelodictyon phaeoclathratiforme (strain DSM 5477 / BU-1)).